Reading from the N-terminus, the 187-residue chain is Large ribosomal subunit protein uL5 (187 aa).

The protein belongs to the universal ribosomal protein uL5 family. Part of the 50S ribosomal subunit; part of the 5S rRNA/L5/L18/L25 subcomplex. Contacts the 5S rRNA and the P site tRNA. Forms a bridge to the 30S subunit in the 70S ribosome.

This is one of the proteins that bind and probably mediate the attachment of the 5S RNA into the large ribosomal subunit, where it forms part of the central protuberance. In the 70S ribosome it contacts protein S13 of the 30S subunit (bridge B1b), connecting the 2 subunits; this bridge is implicated in subunit movement. Contacts the P site tRNA; the 5S rRNA and some of its associated proteins might help stabilize positioning of ribosome-bound tRNAs. This is Large ribosomal subunit protein uL5 from Mycobacterium sp. (strain JLS).